We begin with the raw amino-acid sequence, 618 residues long: Very-long-chain aldehyde decarbonylase GL1-3 (618 aa).

The next 7 helical transmembrane spans lie at 9-29 (LSSWPWAFLGSYKYLLYGPVV), 46-66 (TSWCLHLILLLALRSLTMLFF), 91-111 (MVIMQTLIAAVLVTSRVFPAT), 121-141 (GWAIAVVLHVAVSEPAFYWAH), 174-194 (LESLILTLVAWAPLAGAFMAG), 289-309 (DFVFLVHVVDVVSSMHVPFAF), and 315-335 (LPFATHLVLLPLWPIAFGFML). Positions 127–267 (VLHVAVSEPA…MPLFDALGGT (141 aa)) constitute a Fatty acid hydroxylase domain.

Belongs to the sterol desaturase family. In terms of assembly, homodimer. In terms of tissue distribution, expressed in germinating seeds and stamens.

The protein localises to the endoplasmic reticulum membrane. The catalysed reaction is a long-chain fatty aldehyde + 2 NADPH + O2 + H(+) = a long-chain alkane + formate + 2 NADP(+) + H2O. Functionally, aldehyde decarbonylase involved in the conversion of aldehydes to alkanes. Core component of a very-long-chain alkane synthesis complex. This Oryza sativa subsp. japonica (Rice) protein is Very-long-chain aldehyde decarbonylase GL1-3.